Reading from the N-terminus, the 616-residue chain is 2-isopropylmalate synthase (616 aa).

The tract at residues 1-34 (MSPNDAFISAPAKIETPVGPRNEGQPAWNKQRGS) is disordered. The Pyruvate carboxyltransferase domain occupies 67–341 (PQWCAVDLRD…DPQLDFTDIR (275 aa)). Residues aspartate 76, histidine 280, histidine 282, and asparagine 316 each coordinate Mg(2+). Residues 490–616 (RTAPVEQIAL…NHEAVLAGGV (127 aa)) form a regulatory domain region.

Belongs to the alpha-IPM synthase/homocitrate synthase family. LeuA type 2 subfamily. Homodimer. The cofactor is Mg(2+).

It localises to the cytoplasm. The enzyme catalyses 3-methyl-2-oxobutanoate + acetyl-CoA + H2O = (2S)-2-isopropylmalate + CoA + H(+). It functions in the pathway amino-acid biosynthesis; L-leucine biosynthesis; L-leucine from 3-methyl-2-oxobutanoate: step 1/4. With respect to regulation, inhibited by L-leucine, the pathway end product. Functionally, catalyzes the condensation of the acetyl group of acetyl-CoA with 3-methyl-2-oxobutanoate (2-ketoisovalerate) to form 3-carboxy-3-hydroxy-4-methylpentanoate (2-isopropylmalate). Complements an E.coli leuA deletion. The protein is 2-isopropylmalate synthase of Corynebacterium glutamicum (strain ATCC 13032 / DSM 20300 / JCM 1318 / BCRC 11384 / CCUG 27702 / LMG 3730 / NBRC 12168 / NCIMB 10025 / NRRL B-2784 / 534).